A 67-amino-acid polypeptide reads, in one-letter code: DNA-directed RNA polymerase subunit omega (67 aa).

This sequence belongs to the RNA polymerase subunit omega family. As to quaternary structure, the RNAP catalytic core consists of 2 alpha, 1 beta, 1 beta' and 1 omega subunit. When a sigma factor is associated with the core the holoenzyme is formed, which can initiate transcription.

It carries out the reaction RNA(n) + a ribonucleoside 5'-triphosphate = RNA(n+1) + diphosphate. Its function is as follows. Promotes RNA polymerase assembly. Latches the N- and C-terminal regions of the beta' subunit thereby facilitating its interaction with the beta and alpha subunits. This chain is DNA-directed RNA polymerase subunit omega, found in Burkholderia ambifaria (strain ATCC BAA-244 / DSM 16087 / CCUG 44356 / LMG 19182 / AMMD) (Burkholderia cepacia (strain AMMD)).